The sequence spans 187 residues: T-cell receptor-associated transmembrane adapter 1 (187 aa).

The Extracellular portion of the chain corresponds to 1–7 (MSGSSGC). Residues 8–28 (PFFLWGLLAFLGLALVISLIF) form a helical; Signal-anchor for type III membrane protein membrane-spanning segment. Topologically, residues 29-187 (NISHYVEKQR…LIRAKREPVI (159 aa)) are cytoplasmic. The residue at position 46 (serine 46) is a Phosphoserine. Phosphotyrosine is present on tyrosine 80. An interaction with PIK3R1 region spans residues 80–83 (YEQM). Residues 117–138 (SVKGKRRRPRKQNTNVSDRGKD) form a disordered region.

In terms of assembly, homodimer; disulfide-linked. Interacts with CD3Z. When phosphorylated, interacts with PIK3R1. In terms of processing, phosphorylated on tyrosines upon TCR activation. Present in T-cells (at protein level).

The protein localises to the cell membrane. In terms of biological role, stabilizes the TCR (T-cell antigen receptor)/CD3 complex at the surface of T-cells. The sequence is that of T-cell receptor-associated transmembrane adapter 1 (Trat1) from Mus musculus (Mouse).